The primary structure comprises 435 residues: Adenylosuccinate synthetase (435 aa).

Residues G22–K28 and G50–T52 each bind GTP. The active-site Proton acceptor is D23. Residues D23 and G50 each contribute to the Mg(2+) site. Residues D23–K26, N48–H51, T140, R154, Q235, T250, and R314 each bind IMP. The Proton donor role is filled by H51. A310–R316 is a binding site for substrate. GTP contacts are provided by residues R316, K342–D344, and S424–G426.

This sequence belongs to the adenylosuccinate synthetase family. As to quaternary structure, homodimer. Mg(2+) is required as a cofactor.

It is found in the cytoplasm. It carries out the reaction IMP + L-aspartate + GTP = N(6)-(1,2-dicarboxyethyl)-AMP + GDP + phosphate + 2 H(+). It participates in purine metabolism; AMP biosynthesis via de novo pathway; AMP from IMP: step 1/2. In terms of biological role, plays an important role in the de novo pathway of purine nucleotide biosynthesis. Catalyzes the first committed step in the biosynthesis of AMP from IMP. This is Adenylosuccinate synthetase from Chlorobaculum parvum (strain DSM 263 / NCIMB 8327) (Chlorobium vibrioforme subsp. thiosulfatophilum).